We begin with the raw amino-acid sequence, 225 residues long: MVGFTPVALAALAATGALAFPAGNATELEKRQTTPNSEGWHDGYYYSWWSDGGAQATYTNLEGGTYEISWGDGGNLVGGKGWNPGLNARAIHFEGVYQPNGNSYLAVYGWTRNPLVEYYIVENFGTYDPSSGATDLGTVECDGSIYRLGKTTRVNAPSIDGTQTFDQYWSVRQDKRTSGTVQTGCHFDAWARAGLNVNGDHYYQIVATEGYFSSGYARITVADVG.

Positions 1–31 are cleaved as a signal peptide; sequence MVGFTPVALAALAATGALAFPAGNATELEKR. The residue at position 32 (Q32) is a Pyrrolidone carboxylic acid. Residues 32–222 form the GH11 domain; it reads QTTPNSEGWH…SSGYARITVA (191 aa). Residue E117 is the Nucleophile of the active site. A disulfide bond links C141 and C185. E209 (proton donor) is an active-site residue.

The enzyme catalyses Endohydrolysis of (1-&gt;4)-beta-D-xylosidic linkages in xylans.. It participates in glycan degradation; xylan degradation. The sequence is that of Endo-1,4-beta-xylanase (XYNA) from Thermomyces lanuginosus (Humicola lanuginosa).